We begin with the raw amino-acid sequence, 634 residues long: Frizzled and smoothened-like protein D (634 aa).

The N-terminal stretch at 1 to 21 (MINKFKFYLIFLKLILILVNC) is a signal peptide. The Extracellular portion of the chain corresponds to 22 to 257 (QNSLNDYGFG…QMDSVINMSK (236 aa)). In terms of domain architecture, FZ spans 34-178 (DESSICTSYI…LTKYGYTANG (145 aa)). Residues Asn-126, Asn-168, Asn-215, Asn-243, and Asn-254 are each glycosylated (N-linked (GlcNAc...) asparagine). Residues 258 to 278 (AMSSISFVLSLFNVITFGLLI) traverse the membrane as a helical segment. Over 279–287 (KKKSKYNVC) the chain is Cytoplasmic. A helical membrane pass occupies residues 288-308 (IALMAIGSSFIYLSDIINYGV). At 309–335 (GIEKQLCPEPGRVATQRVDSLCGFTGS) the chain is on the extracellular side. Residues 336–356 (IFHIGITLCVLWSMTMGIVLY) form a helical membrane-spanning segment. Residues 357–368 (SKIKQFKLPNFR) are Cytoplasmic-facing. A helical transmembrane segment spans residues 369–389 (YFLIGNLSFTVVTLIILASAK). Topologically, residues 390–410 (KFQGGNGFLECWMRDRWYVVA) are extracellular. A helical membrane pass occupies residues 411–431 (IFWIPCGIALLLGVLSICGVI). At 432-454 (FEIYKISKNVSLKDSKVVIRELK) the chain is on the cytoplasmic side. A helical transmembrane segment spans residues 455 to 475 (PFVLVVTVSASLIYLFVFYFD). Residues 476-513 (SESKYDFYKKGVEDYILCLLTSENPLDECYTVGPNFNS) lie on the Extracellular side of the membrane. The helical transmembrane segment at 514 to 534 (YFMFYFLIRFFGILFFGIFGT) threads the bilayer. The Cytoplasmic segment spans residues 535-634 (SEIARNAWTE…MEIELDSIDI (100 aa)). The segment at 560–624 (VSSSTRGGGG…NNNNNDNNNK (65 aa)) is disordered. Low complexity-rich tracts occupy residues 572 to 592 (SGIKSSSSSSNSGVCNNNNST) and 609 to 622 (DNTIITNNNNNDNN).

This sequence belongs to the G-protein coupled receptor Fz/Smo family.

It localises to the membrane. The sequence is that of Frizzled and smoothened-like protein D (fslD) from Dictyostelium discoideum (Social amoeba).